Consider the following 490-residue polypeptide: MEKYILEGATGSWEIVVGLEVHAQVISKSKLFSGAATAFGAEPNSQVSLIDAAMPGMLPVVNRECIRQAVRTGLAIGAVINRVSKFDRKNYFYADLPQGYQISQLYHPIVGEGSLLIDVDGEEREIGIERIHVEQDAGKLMHDQHPDKSYVDLNRAGIALMEIVSKPDIRSPAEAGAYIRKLRAILRYVGSCDGNMEEGSMRADVNVSVRKAGEPFGTRCEIKNVNSVRFVQAAIEYEARRQIEVIEDGGEIIQETRLFDHDKGETRSLRSKEDAHDYRYFPDPDLLPLELPESFIDECRESLPELPDTKRQRYITQLNLTPYTASVITADHETAAWFEAMLEYFKAPDAKIATAAANWLTSDLFGALKKLGRDITDSPVSPKQGAELVGLVADGTLSGSLAKQVFEIMLESGQDPAVIVEERGLKQTSDTGAIEEVINKILADNQDKVEQYRSGKDKLFGFFVGQTMRAMGGKANPAVVNEILKKLLSA.

This sequence belongs to the GatB/GatE family. GatB subfamily. In terms of assembly, heterotrimer of A, B and C subunits.

It catalyses the reaction L-glutamyl-tRNA(Gln) + L-glutamine + ATP + H2O = L-glutaminyl-tRNA(Gln) + L-glutamate + ADP + phosphate + H(+). The catalysed reaction is L-aspartyl-tRNA(Asn) + L-glutamine + ATP + H2O = L-asparaginyl-tRNA(Asn) + L-glutamate + ADP + phosphate + 2 H(+). Allows the formation of correctly charged Asn-tRNA(Asn) or Gln-tRNA(Gln) through the transamidation of misacylated Asp-tRNA(Asn) or Glu-tRNA(Gln) in organisms which lack either or both of asparaginyl-tRNA or glutaminyl-tRNA synthetases. The reaction takes place in the presence of glutamine and ATP through an activated phospho-Asp-tRNA(Asn) or phospho-Glu-tRNA(Gln). The polypeptide is Aspartyl/glutamyl-tRNA(Asn/Gln) amidotransferase subunit B (Zymomonas mobilis subsp. mobilis (strain ATCC 31821 / ZM4 / CP4)).